We begin with the raw amino-acid sequence, 114 residues long: Nucleoid-associated protein SGR_3378 (114 aa).

Belongs to the YbaB/EbfC family. Homodimer.

The protein localises to the cytoplasm. It is found in the nucleoid. In terms of biological role, binds to DNA and alters its conformation. May be involved in regulation of gene expression, nucleoid organization and DNA protection. This chain is Nucleoid-associated protein SGR_3378, found in Streptomyces griseus subsp. griseus (strain JCM 4626 / CBS 651.72 / NBRC 13350 / KCC S-0626 / ISP 5235).